Here is a 261-residue protein sequence, read N- to C-terminus: Flap endonuclease Xni (261 aa).

Residue aspartate 105 participates in Mg(2+) binding. The region spanning 164–256 is the 5'-3' exonuclease domain; it reads SQFLDLMALA…DFRVNSPTKA (93 aa). K(+) contacts are provided by leucine 172, alanine 173, proline 181, isoleucine 183, and isoleucine 186. Positions 185 to 190 are interaction with DNA; it reads GIGPKS.

This sequence belongs to the Xni family. Mg(2+) serves as cofactor. The cofactor is K(+).

Functionally, has flap endonuclease activity. During DNA replication, flap endonucleases cleave the 5'-overhanging flap structure that is generated by displacement synthesis when DNA polymerase encounters the 5'-end of a downstream Okazaki fragment. The chain is Flap endonuclease Xni from Shewanella oneidensis (strain ATCC 700550 / JCM 31522 / CIP 106686 / LMG 19005 / NCIMB 14063 / MR-1).